A 985-amino-acid polypeptide reads, in one-letter code: MAAESNDSQKAMNLGPTLRDEPPSTEEIEQRQRKASTSSSEDGEHEDNDRRRVVGSPGSRDGSPRVGSPVARASPRAKRDQKSSDSDSDSSDSDDGVMRKIRSSVMHIRRTSDEETKNRERSSSPDRHEKKSKSRSRSRSRSRSRSRSRSPRERYRRARRSRERERDRYGDRERYERRSSRERDWEHRRRGRSASPDKNDKPPTEEPPVKKRKETLDPILTRTGGAYIPPAKLRMMQAQITDKSSLEYQRMSWEALKKSINGLINKVNVSNIANIIQELLQENIVRGRGLLARSILQAQAASPIFTHVYSAVVAIINSKFPQIGELILKRLILNFRKGYRRNDKQQCLTASKFVGHLINQNVAHEVLCLEMLTLLLERPTDDSVEVAISFLKECGLKLTEVSPRGINAIFERLRNILHESEIDKRVQYMIEVMFAIRKDGFKDHPIIPEGLDLVEEEDQFTHMLPLEDEYNTEDILNVFKLDPNFLENEEKYKTIKREILDEGSSDSGDDAGGSGDDEDDDEEDEEAAAGEEQEKVTIFDQTEVNLVAFRRTIYLAIQSSLDFEECAHKLIKMDFPESQTKELCNMILDCCAQQRTYEKFFGLLAGRFCLLKKEYMESFEAIFQEQYETIHRLETNKLRNVARIFAHLLYTDSVPWSVLECVRMSEDTTTSSSRIFVKILFQELCAYMGLPKLNERLKDTTLQPFFEGLFPRDNPRNTRFAINFFTSIGLGGLTDELREHLKNAPKMIMTQNQEVESSDSSSSSSSSSDSSSSSGSSSESDSSESDSDSSSDSDSSSSSGSSSDSDSRRKKASGKKKDKSKSKKSSKAANQRSPLEERPTKRHENRRQDASKEDRRGSDKHNRDPQRRGQQDESPPARPRGEPERIRGQKEPHRHAQDHQDRPTDSGRHKDDGKNSRVNKDKDRRRSREKEPLRRSRDRSKSRERSRKEMDSRDSYGNGLERADKENRHSDRYKESRRKDDRRHR.

Residues 1–11 are compositionally biased toward polar residues; sequence MAAESNDSQKA. The disordered stretch occupies residues 1 to 225; that stretch reads MAAESNDSQK…LDPILTRTGG (225 aa). Residues 18–32 show a composition bias toward basic and acidic residues; that stretch reads LRDEPPSTEEIEQRQ. A compositionally biased stretch (acidic residues) spans 86–95; that stretch reads SDSDSSDSDD. The segment covering 110 to 129 has biased composition (basic and acidic residues); it reads RTSDEETKNRERSSSPDRHE. Basic residues predominate over residues 130 to 161; that stretch reads KKSKSRSRSRSRSRSRSRSRSPRERYRRARRS. Composition is skewed to basic and acidic residues over residues 162 to 187 and 195 to 209; these read RERE…DWEH and SPDK…EPPV. Residues 257–440 form the MIF4G domain; that stretch reads KKSINGLINK…EVMFAIRKDG (184 aa). The interval 497 to 534 is disordered; the sequence is REILDEGSSDSGDDAGGSGDDEDDDEEDEEAAAGEEQE. The segment covering 501–531 has biased composition (acidic residues); that stretch reads DEGSSDSGDDAGGSGDDEDDDEEDEEAAAGE. Residues 548-664 enclose the MI domain; it reads AFRRTIYLAI…PWSVLECVRM (117 aa). The disordered stretch occupies residues 752–985; that stretch reads NQEVESSDSS…SRRKDDRRHR (234 aa). Over residues 758–780 the composition is skewed to low complexity; the sequence is SDSSSSSSSSSDSSSSSGSSSES. The span at 781–791 shows a compositional bias: acidic residues; the sequence is DSSESDSDSSS. Low complexity predominate over residues 792-804; sequence DSDSSSSSGSSSD. The segment covering 808 to 826 has biased composition (basic residues); that stretch reads RRKKASGKKKDKSKSKKSS. Basic and acidic residues-rich tracts occupy residues 846-871, 879-954, and 961-979; these read RRQD…RGQQ, PRGE…DSRD, and ERAD…SRRK.

It belongs to the CWC22 family. In terms of assembly, component of the pre-catalytic spliceosome B and the catalytic spliceosome C complexes. Component of the minor spliceosome, which splices U12-type introns.

The protein localises to the nucleus. The protein resides in the nucleus speckle. Required for pre-mRNA splicing as component of the spliceosome. Promotes exon-junction complex (EJC) assembly. The sequence is that of Pre-mRNA-splicing factor CWC22 homolog (cwc22) from Danio rerio (Zebrafish).